A 147-amino-acid polypeptide reads, in one-letter code: Ribonuclease 4 (147 aa).

The N-terminal stretch at M1 to G28 is a signal peptide. Q29 carries the post-translational modification Pyrrolidone carboxylic acid. The dUMP site is built by R35, H40, K68, N71, and T72. The active-site Proton acceptor is H40. 4 disulfides stabilise this stretch: C53–C109, C67–C120, C85–C135, and C92–C99. The active-site Proton donor is H144. A dUMP-binding site is contributed by F145.

The protein belongs to the pancreatic ribonuclease family.

It localises to the secreted. Its function is as follows. Cleaves preferentially after uridine bases. Has antimicrobial activity against uropathogenic E.coli (UPEC). Probably contributes to urinary tract sterility. The protein is Ribonuclease 4 (RNASE4) of Pongo abelii (Sumatran orangutan).